Consider the following 166-residue polypeptide: Small ribosomal subunit protein uS5 (166 aa).

In terms of domain architecture, S5 DRBM spans 11-74; that stretch reads LQEKLIAVNR…EKARRNMMNV (64 aa).

It belongs to the universal ribosomal protein uS5 family. Part of the 30S ribosomal subunit. Contacts proteins S4 and S8.

In terms of biological role, with S4 and S12 plays an important role in translational accuracy. Functionally, located at the back of the 30S subunit body where it stabilizes the conformation of the head with respect to the body. This chain is Small ribosomal subunit protein uS5, found in Sodalis glossinidius (strain morsitans).